The primary structure comprises 974 residues: Short transient receptor potential channel 4 (974 aa).

Residues 1–324 (MAQFYYKRNV…YDEFPGWRRR (324 aa)) lie on the Cytoplasmic side of the membrane. 4 ANK repeats span residues 29-60 (LSPSEKAYLNAVEKGDYASVKKSLEEAEIYFK), 71-93 (RTALLIAIENENLELIELLLSFN), 96-118 (VGDALLHAIRKEVVGAVELLLNH), and 141-165 (PDITPIILAAHTNNYEIIKLLVQKG). A multimerization domain region spans residues 87-172 (ELLLSFNVYV…QKGVSVPRPH (86 aa)). Histidine 172, cysteine 176, cysteine 178, and cysteine 181 together coordinate Zn(2+). The stretch at 223–260 (LSWELQELSKVENEFKSEYEELSRQCKQFAKDLLDQTR) forms a coiled coil. The interval 254 to 304 (DLLDQTRSSRELEIILNYRDDNSLIEEQSGNDLARLKLAIKYRQKEFVAQP) is multimerization domain. The discontinuously helical intramembrane region spans 325–359 (HWAVKMVTCFIIGLLFPVFSVCYLIAPKSPLGLFI). Topologically, residues 360-362 (RKP) are cytoplasmic. Residues 363 to 383 (FIKFICHTASYLTFLFLLLLA) form a helical membrane-spanning segment. Residues 384 to 403 (SQHIDRSDLNRQGPPPTIVE) lie on the Extracellular side of the membrane. A helical transmembrane segment spans residues 404-418 (WMILPWVLGFIWGEI). Positions 417, 420, 435, and 438 each coordinate Ca(2+). Residues 419 to 432 (KQMWDGGLQDYIHD) are Cytoplasmic-facing. The chain crosses the membrane as a helical span at residues 433 to 453 (WWNLMDFVMNSLYLATISLKI). Topologically, residues 454–475 (VAFVKYSALNPRESWDMWHPTL) are extracellular. A helical membrane pass occupies residues 476 to 498 (VAEALFAIANIFSSLRLISLFTA). Residues 499 to 511 (NSHLGPLQISLGR) are Cytoplasmic-facing. Residues 512-534 (MLLDILKFLFIYCLVLLAFANGL) form a helical membrane-spanning segment. The Extracellular segment spans residues 535 to 599 (NQLYFYYEET…HEFTEFVGAT (65 aa)). Cysteine 549 and cysteine 554 are oxidised to a cystine. The helical transmembrane segment at 600–620 (MFGTYNVISLVVLLNMLIAMM) threads the bilayer. The interaction with ITPR1, ITPR2 and ITPR3 stretch occupies residues 615–974 (MLIAMMNNSY…AHEDYVTTRL (360 aa)). The Cytoplasmic segment spans residues 621–974 (NNSYQLIADH…AHEDYVTTRL (354 aa)). Residues 765–787 (ANAASSADSDEKSQSEGNGKDKR) are disordered. The span at 773-784 (SDEKSQSEGNGK) shows a compositional bias: basic and acidic residues. A phosphotyrosine; by FYN mark is found at tyrosine 956 and tyrosine 969. Positions 972–974 (TRL) are PDZ-binding domain.

The protein belongs to the transient receptor (TC 1.A.4) family. STrpC subfamily. TRPC4 sub-subfamily. Homotetramer. Heterotetramer with TRPC1 and/or TRPC5. Forms a heteromeric ion channel with TRPC1, with a 1:3 TRPC1:TRPC4 stoichiometry. Interacts with TRPC4AP. Isoform alpha but not isoform beta interacts with ITPR1, ITPR2 and ITPR3. Interacts with NHERF1. Interacts with MX1 and RNF24. Interacts (via CIRB domain) with SESTD1 (via the spectrin 1 repeat) and SPTBN5 (via C-terminus). Interacts with CDH5 and CTNNB1. Interacts (via protein 4.1-binding domain) with EPB41L2. Interacts with PLSCR1. In terms of tissue distribution, abundantly expressed in brain (hippocampal CA1 pyramidal neurons, dentate gyrus granule cells, and cerebral cortical neurons, and in the septal nuclei and the mitral layer of olfactory bulb). Lower levels are detected in other tissues.

It localises to the cell membrane. The catalysed reaction is Ca(2+)(in) = Ca(2+)(out). It catalyses the reaction Na(+)(in) = Na(+)(out). It carries out the reaction Li(+)(in) = Li(+)(out). The enzyme catalyses Cs(+)(in) = Cs(+)(out). Its activity is regulated as follows. May be operated by a phosphatidylinositol second messenger system activated by receptor tyrosine kinases or G-protein coupled receptors. May be activated by intracellular calcium store depletion. Its function is as follows. Forms a receptor-activated non-selective calcium permeant cation channel. Acts as a cell-cell contact-dependent endothelial calcium entry channel. Forms a homomeric ion channel or a heteromeric ion channel with TRPC1; the heteromeric ion channel has reduced calcium permeability compared to the homomeric channel. Also permeable to monovalent ions including sodium, lithium and cesium ions. This is Short transient receptor potential channel 4 (Trpc4) from Mus musculus (Mouse).